We begin with the raw amino-acid sequence, 189 residues long: Flavin prenyltransferase UbiX (189 aa).

FMN-binding positions include 10–12 (GAS), Ser36, 91–94 (STNT), and Arg126. Tyr156 and Lys172 together coordinate dimethylallyl phosphate.

The protein belongs to the UbiX/PAD1 family.

It catalyses the reaction dimethylallyl phosphate + FMNH2 = prenylated FMNH2 + phosphate. Flavin prenyltransferase that catalyzes the synthesis of the prenylated FMN cofactor (prenyl-FMN) for 4-hydroxy-3-polyprenylbenzoic acid decarboxylase UbiD. The prenyltransferase is metal-independent and links a dimethylallyl moiety from dimethylallyl monophosphate (DMAP) to the flavin N5 and C6 atoms of FMN. The polypeptide is Flavin prenyltransferase UbiX (Aquifex aeolicus (strain VF5)).